Consider the following 269-residue polypeptide: Ribosomal RNA small subunit methyltransferase A (269 aa).

S-adenosyl-L-methionine-binding residues include His-11, Leu-13, Gly-38, Glu-59, Asp-84, and Asn-105.

This sequence belongs to the class I-like SAM-binding methyltransferase superfamily. rRNA adenine N(6)-methyltransferase family. RsmA subfamily.

The protein localises to the cytoplasm. The enzyme catalyses adenosine(1518)/adenosine(1519) in 16S rRNA + 4 S-adenosyl-L-methionine = N(6)-dimethyladenosine(1518)/N(6)-dimethyladenosine(1519) in 16S rRNA + 4 S-adenosyl-L-homocysteine + 4 H(+). Its function is as follows. Specifically dimethylates two adjacent adenosines (A1518 and A1519) in the loop of a conserved hairpin near the 3'-end of 16S rRNA in the 30S particle. May play a critical role in biogenesis of 30S subunits. This is Ribosomal RNA small subunit methyltransferase A from Acaryochloris marina (strain MBIC 11017).